Consider the following 142-residue polypeptide: Hemoglobin subunit pi (142 aa).

Residues 2–142 (ALTQAEKAAV…ISSVLTEKYR (141 aa)) enclose the Globin domain. Heme b contacts are provided by His59 and His88.

This sequence belongs to the globin family.

Its function is as follows. The pi' chain is the counterpart of the alpha chain in the major early embryonic hemoglobin P. This chain is Hemoglobin subunit pi, found in Gallus gallus (Chicken).